The chain runs to 351 residues: UDP-3-O-acylglucosamine N-acyltransferase (351 aa).

The active-site Proton acceptor is His240.

Belongs to the transferase hexapeptide repeat family. LpxD subfamily. As to quaternary structure, homotrimer.

The catalysed reaction is a UDP-3-O-[(3R)-3-hydroxyacyl]-alpha-D-glucosamine + a (3R)-hydroxyacyl-[ACP] = a UDP-2-N,3-O-bis[(3R)-3-hydroxyacyl]-alpha-D-glucosamine + holo-[ACP] + H(+). Its pathway is bacterial outer membrane biogenesis; LPS lipid A biosynthesis. Catalyzes the N-acylation of UDP-3-O-acylglucosamine using 3-hydroxyacyl-ACP as the acyl donor. Is involved in the biosynthesis of lipid A, a phosphorylated glycolipid that anchors the lipopolysaccharide to the outer membrane of the cell. In Pseudomonas fluorescens (strain ATCC BAA-477 / NRRL B-23932 / Pf-5), this protein is UDP-3-O-acylglucosamine N-acyltransferase.